The primary structure comprises 373 residues: D-amino-acid transaminase, chloroplastic (373 aa).

The N-terminal 57 residues, 1–57 (MAGLSLEFTVNTWNLRSLSQVPCPLRHGFRFPRRLTRRRTILMCSDSSSQSWNVPVL), are a transit peptide targeting the chloroplast. Residue Arg-128 participates in pyridoxal 5'-phosphate binding. Lys-222 serves as the catalytic Proton acceptor. An N6-(pyridoxal phosphate)lysine modification is found at Lys-222. Glu-255 contacts pyridoxal 5'-phosphate.

The protein belongs to the class-IV pyridoxal-phosphate-dependent aminotransferase family. Homodimer. Requires pyridoxal 5'-phosphate as cofactor.

Its subcellular location is the plastid. It localises to the chloroplast. It carries out the reaction D-alanine + 2-oxoglutarate = D-glutamate + pyruvate. It catalyses the reaction 4-amino-4-deoxychorismate = 4-aminobenzoate + pyruvate + H(+). It functions in the pathway cofactor biosynthesis; tetrahydrofolate biosynthesis; 4-aminobenzoate from chorismate: step 2/2. Its activity is regulated as follows. Inhibited by hydroxylamine or amino-oxyacetic acid. Functionally, amino acid aminotransferase showing activity for D-Asp and D-Ala as amino donors with 2-oxoglutarate as an amino acceptor. Can also use D-Met, D-Tyr, D-Phe, D-Gln, D-Trp and D-Asn as substrates, but no activity with L-Asp, L-Ala, L-Leu, L-Ile or L-Val. Also catalyzes the reverse reaction where an amino group is transferred from D-Glu to pyruvate or oxaloacetate to produce D-Ala or D-Asp, respectively. Also involved in folate biosynthesis, acting as an aminodeoxychorismate lyase converting 4-amino-4-deoxychorismate (ADC) to p-aminobenzoate (PABA). The polypeptide is D-amino-acid transaminase, chloroplastic (Arabidopsis thaliana (Mouse-ear cress)).